The following is a 232-amino-acid chain: U2 small nuclear ribonucleoprotein B'' (232 aa).

The 80-residue stretch at 10–89 (QTVYLRNLNE…KRMRVQYAKT (80 aa)) folds into the RRM 1 domain. Positions 90–159 (RSDCLATEDG…QEPPAPPNNI (70 aa)) are disordered. A compositionally biased stretch (basic and acidic residues) spans 108-123 (KKQEEKAAEKKRRAEE). The span at 127–151 (SGPNAAAQSNGTGYQASRLGKTSQE) shows a compositional bias: polar residues. The region spanning 158-232 (NILFIQNLPA…NPMAISYAKK (75 aa)) is the RRM 2 domain.

It belongs to the RRM U1 A/B'' family. Component of the spliceosome where it is associated with snRNP U2.

The protein resides in the nucleus. It localises to the cajal body. The protein localises to the nucleoplasm. It is found in the cytoplasm. Involved in nuclear pre-mRNA splicing. This chain is U2 small nuclear ribonucleoprotein B'', found in Oryza sativa subsp. japonica (Rice).